The chain runs to 179 residues: MKGGKRIQFTRPNRINNEIRAIKVRLTGVEGDQIGIVNLREALEKAEELGLDLVEISPNAEPPVCRIMDYGKFLYEKSKSSKEQKKKQKVIQVKEIKFRPSTDEGDYQVKLRNLIRFLEDGDKVKITLRFRGREMAHQKIGIDVLNRVKNDLIELAIIESFPSKIEGRQMIMVLAPKKK.

This sequence belongs to the IF-3 family. Monomer.

The protein localises to the cytoplasm. In terms of biological role, IF-3 binds to the 30S ribosomal subunit and shifts the equilibrium between 70S ribosomes and their 50S and 30S subunits in favor of the free subunits, thus enhancing the availability of 30S subunits on which protein synthesis initiation begins. The sequence is that of Translation initiation factor IF-3 from Buchnera aphidicola subsp. Schizaphis graminum (strain Sg).